The following is a 1179-amino-acid chain: ATP-dependent helicase/deoxyribonuclease subunit B (1179 aa).

It belongs to the helicase family. AddB/RexB type 2 subfamily. Heterodimer of AddA and RexB. Mg(2+) serves as cofactor.

Functionally, the heterodimer acts as both an ATP-dependent DNA helicase and an ATP-dependent, dual-direction single-stranded exonuclease. Recognizes the chi site generating a DNA molecule suitable for the initiation of homologous recombination. This subunit has 5' -&gt; 3' nuclease activity but not helicase activity. This Lacticaseibacillus casei (strain BL23) (Lactobacillus casei) protein is ATP-dependent helicase/deoxyribonuclease subunit B.